A 65-amino-acid chain; its full sequence is Large ribosomal subunit protein bL35 (65 aa).

It belongs to the bacterial ribosomal protein bL35 family.

The protein is Large ribosomal subunit protein bL35 of Porphyromonas gingivalis (strain ATCC 33277 / DSM 20709 / CIP 103683 / JCM 12257 / NCTC 11834 / 2561).